We begin with the raw amino-acid sequence, 406 residues long: CMP-sialic acid transporter 2 (406 aa).

The Cytoplasmic segment spans residues 1–41; the sequence is MKNGMAECSVCRSRLVSPSSKAISRAYDNYNYKIRVSSKQR. Residues 42-62 traverse the membrane as a helical segment; that stretch reads ALNVFLVVGDCMLVGLQPVLV. The Lumenal segment spans residues 63–75; sequence YMSKVDGKFNFSP. A helical membrane pass occupies residues 76–96; sequence ISVNFLTEIAKVIFAMVMLLF. Topologically, residues 97-148 are cytoplasmic; sequence QARHQKVGEKPLLSLSTFVQAARNNMLLAVPAGLYAINNYLKFTMQLYFNPA. A helical membrane pass occupies residues 149–169; that stretch reads TVKMLSNLKVLVIAVLLKMIM. Topologically, residues 170–172 are lumenal; that stretch reads KRR. The helical transmembrane segment at 173 to 193 threads the bilayer; sequence FSIIQWEALALLLIGISINQL. The Cytoplasmic segment spans residues 194–201; it reads RSLPEGAT. Residues 202-222 traverse the membrane as a helical segment; that stretch reads TVAVPIATGAYICTFIFVTVP. At 223–245 the chain is on the lumenal side; sequence SLASVYNEYALKSQYDTSIYLQN. The helical transmembrane segment at 246–266 threads the bilayer; it reads LFLYGYGAIFNFLGILGTVIY. Residues 267-282 are Cytoplasmic-facing; that stretch reads KGPGSFDILQGHSRAT. Residues 283-303 traverse the membrane as a helical segment; sequence MFLILNNAAQGILSSFFFKYA. Over 304-323 the chain is Lumenal; that stretch reads DTILKKYSSTVATIFTGIAS. The helical transmembrane segment at 324–344 threads the bilayer; the sequence is AALFGHILTMNFLLGISIVFI. The Cytoplasmic segment spans residues 345–406; that stretch reads SMHQFFSPLS…SDDRVPLLPR (62 aa).

The protein belongs to the nucleotide-sugar transporter family. CMP-Sialate:CMP antiporter (TC 2.A.7.12) subfamily.

The protein localises to the golgi apparatus membrane. In terms of biological role, sugar transporter involved in the transport of CMP-sialic acid from the cytoplasm into the Golgi. This Arabidopsis thaliana (Mouse-ear cress) protein is CMP-sialic acid transporter 2.